Consider the following 237-residue polypeptide: UPF0758 protein Veis_1654 (237 aa).

The MPN domain maps to 115–237 (VFDTPDAVKH…ALSMAEMGLL (123 aa)). Zn(2+) contacts are provided by H186, H188, and D199. The JAMM motif signature appears at 186–199 (HNHPSGSVQPSRAD).

Belongs to the UPF0758 family.

This Verminephrobacter eiseniae (strain EF01-2) protein is UPF0758 protein Veis_1654.